The primary structure comprises 743 residues: Probable TonB-dependent receptor BfrD (743 aa).

Positions 1–30 (MKFYSSHPMPESLAAAIAVPLLGLLPAAQA) are cleaved as a signal peptide. One can recognise a TBDR plug domain in the interval 62–168 (PLADTPRTVQ…AGGSINLVTK (107 aa)). A TBDR beta-barrel domain is found at 173–743 (QDFTEVQAGI…SAMLTFKLSY (571 aa)). The TonB C-terminal box motif lies at 726–743 (YAALGPGRSAMLTFKLSY).

The protein belongs to the TonB-dependent receptor family.

It localises to the cell outer membrane. Functionally, probably involved in iron transport. The polypeptide is Probable TonB-dependent receptor BfrD (bfrD) (Bordetella pertussis (strain Tohama I / ATCC BAA-589 / NCTC 13251)).